A 210-amino-acid chain; its full sequence is Na(+)-translocating NADH-quinone reductase subunit D (210 aa).

Helical transmembrane passes span 10-30 (VLFG…GVCS), 42-62 (LVMS…ISMI), 72-92 (IIVQ…ILKA), 103-123 (VFVG…AFAM), 143-163 (FVLI…ILGF), and 178-198 (NGLL…IWFI).

The protein belongs to the NqrDE/RnfAE family. As to quaternary structure, composed of six subunits; NqrA, NqrB, NqrC, NqrD, NqrE and NqrF.

Its subcellular location is the cell inner membrane. The catalysed reaction is a ubiquinone + n Na(+)(in) + NADH + H(+) = a ubiquinol + n Na(+)(out) + NAD(+). Its function is as follows. NQR complex catalyzes the reduction of ubiquinone-1 to ubiquinol by two successive reactions, coupled with the transport of Na(+) ions from the cytoplasm to the periplasm. NqrA to NqrE are probably involved in the second step, the conversion of ubisemiquinone to ubiquinol. The protein is Na(+)-translocating NADH-quinone reductase subunit D of Pseudoalteromonas atlantica (strain T6c / ATCC BAA-1087).